A 179-amino-acid chain; its full sequence is M-phase-specific PLK1-interacting protein (179 aa).

Residues 1-135 (MQRQNFRPPT…RVREKRMSNE (135 aa)) are disordered. Arginine 37 carries the post-translational modification Asymmetric dimethylarginine. Residues serine 40 and serine 47 each carry the phosphoserine modification. A Phosphothreonine modification is found at threonine 51. Arginine 57 is subject to Omega-N-methylarginine. 2 positions are modified to asymmetric dimethylarginine: arginine 59 and arginine 68. A compositionally biased stretch (low complexity) spans 60 to 71 (PYGSSHSPRHGG). Serine 72 is subject to Phosphoserine. Arginine 77 bears the Asymmetric dimethylarginine mark. The span at 79 to 109 (GSPSPGGYPGSYSRSPAGSQQQFGYSPGQQQ) shows a compositional bias: low complexity. Phosphoserine is present on residues serine 80, serine 82, serine 93, serine 104, and serine 115. Residues 110 to 122 (THPQGSPRTSTPF) are compositionally biased toward polar residues. Arginine 117 carries the omega-N-methylarginine modification. Threonine 120 carries the post-translational modification Phosphothreonine. Residues serine 124 and serine 133 each carry the phosphoserine modification.

In terms of assembly, interacts with PLK1; phosphorylation-dependent. In terms of processing, phosphorylated during mitosis in the cell cycle probably by CDK1. As to expression, expressed at highest levels in liver and kidney; intermediate expression in skeletal muscle, pancreas, heart and placenta; low expression in brain and lung. Expressed in epidermis and hair follicles.

The protein localises to the nucleus. Its subcellular location is the cytoplasm. It is found in the cytoskeleton. It localises to the microtubule organizing center. The protein resides in the centrosome. May play a role in maintenance of cell cycle integrity by regulating mitosis or cytokinesis. This is M-phase-specific PLK1-interacting protein (MPLKIP) from Homo sapiens (Human).